The sequence spans 107 residues: Anti-adapter protein IraM (107 aa).

It belongs to the IraM/RssC family.

The protein localises to the cytoplasm. Inhibits RpoS proteolysis by regulating RssB activity, thereby increasing the stability of the sigma stress factor RpoS during magnesium starvation. The protein is Anti-adapter protein IraM of Escherichia coli O7:K1 (strain IAI39 / ExPEC).